Reading from the N-terminus, the 443-residue chain is Minovincinine 19-hydroxy-O-acetyltransferase (443 aa).

The active-site Proton acceptor is the histidine 157. The short motif at 215–222 is the Nuclear localization signal element; that stretch reads RKRFLFSP. Residues 316-343 are a coiled coil; it reads TKLVIGELRKAKDKLKNLSQEKLNYVAR. Catalysis depends on aspartate 384, which acts as the Proton acceptor.

The protein belongs to the plant acyltransferase family. In terms of assembly, monomer. Expressed in cortical cells of the root tip, especially in hairy roots, as well as in etiolated seedlings. Mostly expressed in roots, and, at lower levels, in leaves.

Its subcellular location is the cytoplasm. It localises to the nucleus. It carries out the reaction (+)-minovincinine + acetyl-CoA = (+)-echitovenine + CoA. It participates in alkaloid biosynthesis. In terms of biological role, component of the monoterpenoid indole alkaloids (MIAs, e.g. echitovenine, tabersonine, lochnericine, 19-hydroxytabersonine and horhammericine) biosynthetic pathway; MIAs are used in cancer treatment and other medical applications. Acyltransferase catalyzing the conversion of (+)-minovincinine to (+)-echitovenine. This Catharanthus roseus (Madagascar periwinkle) protein is Minovincinine 19-hydroxy-O-acetyltransferase.